The following is a 456-amino-acid chain: Aminotransferase ALD1, chloroplastic (456 aa).

Residues 1–43 constitute a chloroplast transit peptide; the sequence is MVSLMFFSSASPLCSSPSKIPKASLDFEMKKLGGSTKLVRNVN. Pyridoxal 5'-phosphate contacts are provided by residues Tyr-108, 142–143, Asn-223, Asp-251, Tyr-254, Ser-281, Ser-283, Arg-292, and Asn-323; that span reads AQ.

This sequence belongs to the class-I pyridoxal-phosphate-dependent aminotransferase family. LL-diaminopimelate aminotransferase subfamily. Pyridoxal 5'-phosphate serves as cofactor. In terms of tissue distribution, highly expressed in senescing leaves, flowers, siliques and seeds.

The protein localises to the plastid. Its subcellular location is the chloroplast. Aminotransferase involved in local and systemic acquired resistance (SAR) to the bacterial pathogen P.syringae. Required for salicylic acid (SA) and camalexin accumulation upon pathogen infection. Possesses aminotransferase activity in vitro and may generate amino-acid-derived defense signals in vivo. May be involved in ethylene-induced senescence signaling. Involved in the biosynthesis of pipecolate (Pip), a metabolite that orchestrates defense amplification, positive regulation of SA biosynthesis, and priming to guarantee effective local resistance induction and the establishment of SAR. Converts lysine to alpha-keto-epsilon-aminocaproate, which then can spontaneously cyclize to form delta-(1)-piperideine-2-carboxylate (P2C). P2C is converted to Pip by SARD4. May produce non-Pip metabolites that play roles in immunity. Involved in the synthesis of distinct metabolite signals that affect basal and early defenses, and later defense responses. In Arabidopsis thaliana (Mouse-ear cress), this protein is Aminotransferase ALD1, chloroplastic.